The primary structure comprises 226 residues: ATP synthase F(0) complex subunit a (226 aa).

6 consecutive transmembrane segments (helical) span residues 13 to 33, 69 to 89, 97 to 117, 138 to 158, 179 to 199, and 201 to 221; these read VILGIPLIAIAMLDPFTLISW, WALLLTSLMLLLMSLNLLGLL, TQLSLNMGLAVPLWLATVIMA, IPVLIIIETISLFIRPLALGV, FVLLSIMPTVAILTSIVLFLL, and LLEIAVAMIQAYVFVLLLSLY.

This sequence belongs to the ATPase A chain family. Component of the ATP synthase complex composed at least of ATP5F1A/subunit alpha, ATP5F1B/subunit beta, ATP5MC1/subunit c (homooctomer), MT-ATP6/subunit a, MT-ATP8/subunit 8, ATP5ME/subunit e, ATP5MF/subunit f, ATP5MG/subunit g, ATP5MK/subunit k, ATP5MJ/subunit j, ATP5F1C/subunit gamma, ATP5F1D/subunit delta, ATP5F1E/subunit epsilon, ATP5PF/subunit F6, ATP5PB/subunit b, ATP5PD/subunit d, ATP5PO/subunit OSCP. ATP synthase complex consists of a soluble F(1) head domain (subunits alpha(3) and beta(3)) - the catalytic core - and a membrane F(0) domain - the membrane proton channel (subunits c, a, 8, e, f, g, k and j). These two domains are linked by a central stalk (subunits gamma, delta, and epsilon) rotating inside the F1 region and a stationary peripheral stalk (subunits F6, b, d, and OSCP). Interacts with DNAJC30; interaction is direct.

The protein resides in the mitochondrion inner membrane. The catalysed reaction is H(+)(in) = H(+)(out). Functionally, subunit a, of the mitochondrial membrane ATP synthase complex (F(1)F(0) ATP synthase or Complex V) that produces ATP from ADP in the presence of a proton gradient across the membrane which is generated by electron transport complexes of the respiratory chain. ATP synthase complex consist of a soluble F(1) head domain - the catalytic core - and a membrane F(1) domain - the membrane proton channel. These two domains are linked by a central stalk rotating inside the F(1) region and a stationary peripheral stalk. During catalysis, ATP synthesis in the catalytic domain of F(1) is coupled via a rotary mechanism of the central stalk subunits to proton translocation. With the subunit c (ATP5MC1), forms the proton-conducting channel in the F(0) domain, that contains two crucial half-channels (inlet and outlet) that facilitate proton movement from the mitochondrial intermembrane space (IMS) into the matrix. Protons are taken up via the inlet half-channel and released through the outlet half-channel, following a Grotthuss mechanism. This is ATP synthase F(0) complex subunit a from Xenopus laevis (African clawed frog).